A 158-amino-acid polypeptide reads, in one-letter code: Protein OPG060 (158 aa).

Belongs to the orthopoxvirus OPG058 family.

This is Protein OPG060 (OPG060) from Homo sapiens (Human).